Here is a 261-residue protein sequence, read N- to C-terminus: Phosphonates import ATP-binding protein PhnC (261 aa).

One can recognise an ABC transporter domain in the interval leucine 15–arginine 257. An ATP-binding site is contributed by glycine 48 to serine 55.

This sequence belongs to the ABC transporter superfamily. Phosphonates importer (TC 3.A.1.9.1) family. As to quaternary structure, the complex is composed of two ATP-binding proteins (PhnC), two transmembrane proteins (PhnE) and a solute-binding protein (PhnD).

It localises to the cell inner membrane. The enzyme catalyses phosphonate(out) + ATP + H2O = phosphonate(in) + ADP + phosphate + H(+). Part of the ABC transporter complex PhnCDE involved in phosphonates import. Responsible for energy coupling to the transport system. This is Phosphonates import ATP-binding protein PhnC from Hyphomonas neptunium (strain ATCC 15444).